We begin with the raw amino-acid sequence, 577 residues long: Anthranilate synthase alpha subunit 1, chloroplastic (577 aa).

The transit peptide at 1–34 (MASLVLSLRIAPSTPPLGLGGGRFRGRRGAVACR) directs the protein to the chloroplast.

It belongs to the anthranilate synthase component I family. In terms of assembly, heterotetramer consisting of two non-identical subunits: a beta subunit and a large alpha subunit.

Its subcellular location is the plastid. It is found in the chloroplast. The catalysed reaction is chorismate + L-glutamine = anthranilate + pyruvate + L-glutamate + H(+). The protein operates within amino-acid biosynthesis; L-tryptophan biosynthesis; L-tryptophan from chorismate: step 1/5. With respect to regulation, feedback inhibition by tryptophan. Part of a heterotetrameric complex that catalyzes the two-step biosynthesis of anthranilate, an intermediate in the biosynthesis of L-tryptophan. In the first step, the glutamine-binding beta subunit of anthranilate synthase (AS) provides the glutamine amidotransferase activity which generates ammonia as a substrate that, along with chorismate, is used in the second step, catalyzed by the large alpha subunit of AS to produce anthranilate. The chain is Anthranilate synthase alpha subunit 1, chloroplastic (ASA1) from Oryza sativa subsp. indica (Rice).